Here is a 339-residue protein sequence, read N- to C-terminus: GTP 3',8-cyclase (339 aa).

Residues 13-249 (RYGRPLRDLR…GEVAQRHAFA (237 aa)) enclose the Radical SAM core domain. Arginine 22 lines the GTP pocket. [4Fe-4S] cluster-binding residues include cysteine 29 and cysteine 33. S-adenosyl-L-methionine is bound at residue tyrosine 35. Cysteine 36 serves as a coordination point for [4Fe-4S] cluster. Position 75 (arginine 75) interacts with GTP. S-adenosyl-L-methionine is bound at residue glycine 79. Threonine 106 serves as a coordination point for GTP. Residue serine 130 participates in S-adenosyl-L-methionine binding. Lysine 168 is a binding site for GTP. Residue methionine 202 coordinates S-adenosyl-L-methionine. Cysteine 266 and cysteine 269 together coordinate [4Fe-4S] cluster. 271 to 273 (RAR) contributes to the GTP binding site. Cysteine 283 is a binding site for [4Fe-4S] cluster.

It belongs to the radical SAM superfamily. MoaA family. As to quaternary structure, monomer and homodimer. Requires [4Fe-4S] cluster as cofactor.

The enzyme catalyses GTP + AH2 + S-adenosyl-L-methionine = (8S)-3',8-cyclo-7,8-dihydroguanosine 5'-triphosphate + 5'-deoxyadenosine + L-methionine + A + H(+). The protein operates within cofactor biosynthesis; molybdopterin biosynthesis. Catalyzes the cyclization of GTP to (8S)-3',8-cyclo-7,8-dihydroguanosine 5'-triphosphate. The protein is GTP 3',8-cyclase of Xanthomonas campestris pv. campestris (strain 8004).